The following is a 207-amino-acid chain: dITP/XTP pyrophosphatase (207 aa).

Substrate is bound at residue 11 to 16; sequence TGNPGK. Asp72 (proton acceptor) is an active-site residue. A Mg(2+)-binding site is contributed by Asp72. Substrate is bound by residues Ser73, 154–157, Lys177, and 182–183; these read FGYD and HR.

This sequence belongs to the HAM1 NTPase family. Homodimer. Requires Mg(2+) as cofactor.

The enzyme catalyses XTP + H2O = XMP + diphosphate + H(+). It catalyses the reaction dITP + H2O = dIMP + diphosphate + H(+). The catalysed reaction is ITP + H2O = IMP + diphosphate + H(+). In terms of biological role, pyrophosphatase that catalyzes the hydrolysis of nucleoside triphosphates to their monophosphate derivatives, with a high preference for the non-canonical purine nucleotides XTP (xanthosine triphosphate), dITP (deoxyinosine triphosphate) and ITP. Seems to function as a house-cleaning enzyme that removes non-canonical purine nucleotides from the nucleotide pool, thus preventing their incorporation into DNA/RNA and avoiding chromosomal lesions. This Thermus thermophilus (strain ATCC 27634 / DSM 579 / HB8) protein is dITP/XTP pyrophosphatase.